The primary structure comprises 101 residues: MGFYGNLNHMEKGKSGYVTHKQLDKKLEVFKQELLVEFDQRYVTKAEFKEFQIEVREGFRIQGEAMNARMDRFESLVLKSLESINNTLIDFGKRIDKLESK.

It belongs to the UPF0134 family.

The sequence is that of UPF0134 protein MPN_675 from Mycoplasma pneumoniae (strain ATCC 29342 / M129 / Subtype 1) (Mycoplasmoides pneumoniae).